Consider the following 304-residue polypeptide: uncharacterized protein (304 aa).

Positions 1 to 10 (MLWAHRKKRK) are enriched in basic residues. The disordered stretch occupies residues 1–28 (MLWAHRKKRKAATETTEDKPLESHRAND). Basic and acidic residues predominate over residues 16 to 27 (TEDKPLESHRAN). Ser39 is modified (phosphoserine). Polar residues predominate over residues 91–101 (KQKISGSSMTK). Disordered stretches follow at residues 91 to 115 (KQKI…SMED), 138 to 160 (SMLQ…ISPE), and 190 to 304 (SHTV…IYGS). Basic and acidic residues predominate over residues 151–160 (HAESRNISPE). The residue at position 158 (Ser158) is a Phosphoserine. Residues 195–206 (SQSRHSNQSHHS) are compositionally biased toward low complexity. Polar residues predominate over residues 208–223 (PSHQSNQSHPVYSSYQ). The segment covering 229-248 (HLSPQSYPSYSSHQSHPGHS) has biased composition (low complexity). Positions 249–263 (NHQGHSGLSSHQTHL) are enriched in polar residues. Positions 264 to 292 (GHSNHQGHPGHSSHQSHQGQPGHPSHQSH) are enriched in low complexity.

This is an uncharacterized protein from Mus musculus (Mouse).